We begin with the raw amino-acid sequence, 141 residues long: Nucleoside diphosphate kinase (141 aa).

Residues K9, F57, R85, T91, R102, and N112 each contribute to the ATP site. The active-site Pros-phosphohistidine intermediate is the H115.

Belongs to the NDK family. In terms of assembly, homotetramer. The cofactor is Mg(2+).

The protein localises to the cytoplasm. It catalyses the reaction a 2'-deoxyribonucleoside 5'-diphosphate + ATP = a 2'-deoxyribonucleoside 5'-triphosphate + ADP. It carries out the reaction a ribonucleoside 5'-diphosphate + ATP = a ribonucleoside 5'-triphosphate + ADP. Functionally, major role in the synthesis of nucleoside triphosphates other than ATP. The ATP gamma phosphate is transferred to the NDP beta phosphate via a ping-pong mechanism, using a phosphorylated active-site intermediate. The chain is Nucleoside diphosphate kinase from Chlamydia muridarum (strain MoPn / Nigg).